Reading from the N-terminus, the 200-residue chain is Coiled-coil domain-containing protein 28B (200 aa).

Methionine 1 carries the post-translational modification N-acetylmethionine. Basic residues predominate over residues 1-10; it reads MEDKKKKRSP. A disordered region spans residues 1–49; sequence MEDKKKKRSPKPCLTQPAQAPGTLRRVPVPTSHSGSLALGLPHLPSPKQ. A phosphoserine mark is found at serine 46 and serine 115. Positions 140 to 152 are enriched in acidic residues; sequence GEEEDEEEEEDGV. The segment at 140-165 is disordered; sequence GEEEDEEEEEDGVTEGLPEEQKKTMA. Residues 158-189 are a coiled coil; the sequence is EEQKKTMADRNLDQLLSNLEDLSNSIQKLHLA.

As to quaternary structure, interacts with BBS1, BBS2, BBS4, BBS5, BBS6, BBS7 and TTC8/BBS8. Interacts with MAPKAP1/SIN1 isoform 1 and RICTOR. Expressed in the retina, pericardium and limb epithelium.

The protein localises to the cytoplasm. The protein resides in the cytoskeleton. Its subcellular location is the microtubule organizing center. It localises to the centrosome. Functionally, involved in ciliogenesis. Regulates cilia length through its interaction with MAPKAP1/SIN1 but independently of mTORC2 complex. Modulates mTORC2 complex assembly and function, possibly enhances AKT1 phosphorylation. Does not seem to modulate assembly and function of mTORC1 complex. The chain is Coiled-coil domain-containing protein 28B (Ccdc28b) from Mus musculus (Mouse).